The sequence spans 429 residues: GTPase Obg (429 aa).

The 158-residue stretch at 1 to 158 (MFVDQVKIYV…RNVQLELKVL (158 aa)) folds into the Obg domain. The interval 124 to 145 (RGNKRFATPANPAPELSENGEP) is disordered. An OBG-type G domain is found at 159–329 (ADVGLVGFPS…LLLAIADKLE (171 aa)). GTP-binding positions include 165-172 (GFPSVGKS), 190-194 (FTTIV), 212-215 (DLPG), 282-285 (NKMD), and 310-312 (SAV). Mg(2+)-binding residues include S172 and T192. One can recognise an OCT domain in the interval 351 to 429 (KYIAEEPDFE…LLDYEFEFMD (79 aa)).

This sequence belongs to the TRAFAC class OBG-HflX-like GTPase superfamily. OBG GTPase family. Monomer. It depends on Mg(2+) as a cofactor.

The protein resides in the cytoplasm. An essential GTPase which binds GTP, GDP and possibly (p)ppGpp with moderate affinity, with high nucleotide exchange rates and a fairly low GTP hydrolysis rate. Plays a role in control of the cell cycle, stress response, ribosome biogenesis and in those bacteria that undergo differentiation, in morphogenesis control. The polypeptide is GTPase Obg (Listeria welshimeri serovar 6b (strain ATCC 35897 / DSM 20650 / CCUG 15529 / CIP 8149 / NCTC 11857 / SLCC 5334 / V8)).